The primary structure comprises 439 residues: Tol-Pal system protein TolB (439 aa).

The signal sequence occupies residues 1-22 (MKKPLRWLAALTVLLLPLSALA).

Belongs to the TolB family. The Tol-Pal system is composed of five core proteins: the inner membrane proteins TolA, TolQ and TolR, the periplasmic protein TolB and the outer membrane protein Pal. They form a network linking the inner and outer membranes and the peptidoglycan layer.

Its subcellular location is the periplasm. Its function is as follows. Part of the Tol-Pal system, which plays a role in outer membrane invagination during cell division and is important for maintaining outer membrane integrity. The sequence is that of Tol-Pal system protein TolB from Xanthomonas oryzae pv. oryzae (strain KACC10331 / KXO85).